A 516-amino-acid polypeptide reads, in one-letter code: Cytochrome P450 6d1 (516 aa).

Cys461 is a binding site for heme.

The protein belongs to the cytochrome P450 family. Heme is required as a cofactor.

Its subcellular location is the endoplasmic reticulum membrane. It is found in the microsome membrane. Functionally, metabolizes pyrethroid insecticides and other xenobiotics. The chain is Cytochrome P450 6d1 (CYP6D1) from Musca domestica (House fly).